The chain runs to 341 residues: Guanine nucleotide-binding protein subunit beta (341 aa).

WD repeat units follow at residues 54–93 (GHLA…KVHA), 96–135 (LRSS…GNVR), 142–180 (GHTG…QTTA), 183–222 (GHTG…CKQT), 225–264 (GHES…EIGM), 269–308 (NIIC…RAGV), and 311–341 (GHDN…RIWN).

Belongs to the WD repeat G protein beta family. G proteins are composed of 3 units, alpha, beta and gamma. The G protein beta1-gamma2 dimer interacts with calmodulin. As to expression, abundantly expressed in gills, gonad and mantle and at lower levels in digestion gland. Not detected in muscle.

Its subcellular location is the cytoplasm. In terms of biological role, guanine nucleotide-binding proteins (G proteins) are involved as a modulator or transducer in various transmembrane signaling systems. The beta and gamma chains are required for the GTPase activity, for replacement of GDP by GTP, and for G protein-effector interaction. This chain is Guanine nucleotide-binding protein subunit beta, found in Pinctada fucata (Akoya pearl oyster).